A 386-amino-acid polypeptide reads, in one-letter code: Chaperone protein DnaJ (386 aa).

One can recognise a J domain in the interval Asp-5–Gly-69. The CR-type zinc-finger motif lies at Gly-140 to Arg-224. 8 residues coordinate Zn(2+): Cys-153, Cys-156, Cys-170, Cys-173, Cys-196, Cys-199, Cys-212, and Cys-215. 4 CXXCXGXG motif repeats span residues Cys-153 to Gly-160, Cys-170 to Gly-177, Cys-196 to Gly-203, and Cys-212 to Gly-219.

The protein belongs to the DnaJ family. Homodimer. The cofactor is Zn(2+).

The protein resides in the cytoplasm. Its function is as follows. Participates actively in the response to hyperosmotic and heat shock by preventing the aggregation of stress-denatured proteins and by disaggregating proteins, also in an autonomous, DnaK-independent fashion. Unfolded proteins bind initially to DnaJ; upon interaction with the DnaJ-bound protein, DnaK hydrolyzes its bound ATP, resulting in the formation of a stable complex. GrpE releases ADP from DnaK; ATP binding to DnaK triggers the release of the substrate protein, thus completing the reaction cycle. Several rounds of ATP-dependent interactions between DnaJ, DnaK and GrpE are required for fully efficient folding. Also involved, together with DnaK and GrpE, in the DNA replication of plasmids through activation of initiation proteins. The sequence is that of Chaperone protein DnaJ from Limosilactobacillus fermentum (strain NBRC 3956 / LMG 18251) (Lactobacillus fermentum).